The primary structure comprises 392 residues: 8-amino-7-oxononanoate synthase (392 aa).

Arg21 contacts substrate. 108-109 (GF) provides a ligand contact to pyridoxal 5'-phosphate. Substrate is bound at residue His133. Pyridoxal 5'-phosphate contacts are provided by residues Ser181, 206–209 (DDAH), and 237–240 (TLSK). N6-(pyridoxal phosphate)lysine is present on Lys240. Thr354 is a binding site for substrate.

This sequence belongs to the class-II pyridoxal-phosphate-dependent aminotransferase family. BioF subfamily. As to quaternary structure, homodimer. It depends on pyridoxal 5'-phosphate as a cofactor.

The catalysed reaction is 6-carboxyhexanoyl-[ACP] + L-alanine + H(+) = (8S)-8-amino-7-oxononanoate + holo-[ACP] + CO2. It functions in the pathway cofactor biosynthesis; biotin biosynthesis. Functionally, catalyzes the decarboxylative condensation of pimeloyl-[acyl-carrier protein] and L-alanine to produce 8-amino-7-oxononanoate (AON), [acyl-carrier protein], and carbon dioxide. In Symbiobacterium thermophilum (strain DSM 24528 / JCM 14929 / IAM 14863 / T), this protein is 8-amino-7-oxononanoate synthase.